A 165-amino-acid polypeptide reads, in one-letter code: 2-C-methyl-D-erythritol 2,4-cyclodiphosphate synthase (165 aa).

The a divalent metal cation site is built by Asp-9 and His-11. 4-CDP-2-C-methyl-D-erythritol 2-phosphate-binding positions include 9–11 and 35–36; these read DVH and HS. His-43 lines the a divalent metal cation pocket. 4-CDP-2-C-methyl-D-erythritol 2-phosphate-binding positions include 57–59, 101–107, 133–136, Phe-140, and Arg-143; these read DIG, AQAPKML, and TTTE.

This sequence belongs to the IspF family. As to quaternary structure, homotrimer. Requires a divalent metal cation as cofactor.

It carries out the reaction 4-CDP-2-C-methyl-D-erythritol 2-phosphate = 2-C-methyl-D-erythritol 2,4-cyclic diphosphate + CMP. The protein operates within isoprenoid biosynthesis; isopentenyl diphosphate biosynthesis via DXP pathway; isopentenyl diphosphate from 1-deoxy-D-xylulose 5-phosphate: step 4/6. In terms of biological role, involved in the biosynthesis of isopentenyl diphosphate (IPP) and dimethylallyl diphosphate (DMAPP), two major building blocks of isoprenoid compounds. Catalyzes the conversion of 4-diphosphocytidyl-2-C-methyl-D-erythritol 2-phosphate (CDP-ME2P) to 2-C-methyl-D-erythritol 2,4-cyclodiphosphate (ME-CPP) with a corresponding release of cytidine 5-monophosphate (CMP). The polypeptide is 2-C-methyl-D-erythritol 2,4-cyclodiphosphate synthase (Pseudoalteromonas translucida (strain TAC 125)).